A 96-amino-acid chain; its full sequence is Small ubiquitin-related modifier 2 (96 aa).

A Glycyl lysine isopeptide (Lys-Gly) (interchain with G-Cter in SUMO) cross-link involves residue Lys11. Positions 16–96 (DHINLKVAGQ…FQQQTGGHRI (81 aa)) constitute a Ubiquitin-like domain. Gly93 is covalently cross-linked (Glycyl lysine isopeptide (Gly-Lys) (interchain with K-? in acceptor proteins)). Residues 94 to 96 (HRI) constitute a propeptide that is removed on maturation.

The protein belongs to the ubiquitin family. SUMO subfamily. Interacts with sae2 and ube2i. Covalently attached to a number of proteins. In terms of processing, polymeric chains can be formed through Lys-11 cross-linking. Post-translationally, cleavage of precursor form by a sentrin-specific protease is necessary for function.

It is found in the nucleus. Ubiquitin-like protein that can be covalently attached to proteins as a monomer or as a lysine-linked polymer. Covalent attachment via an isopeptide bond to its substrates requires prior activation by the E1 complex sae1-sae2 and linkage to the E2 enzyme ube2i, and can be promoted by an E3 ligase such as pias1-4. This post-translational modification on lysine residues of proteins plays a crucial role in a number of cellular processes such as nuclear transport, DNA replication and repair, mitosis and signal transduction. Polymeric sumo2 chains are also susceptible to polyubiquitination which functions as a signal for proteasomal degradation of modified proteins. In Danio rerio (Zebrafish), this protein is Small ubiquitin-related modifier 2.